A 510-amino-acid polypeptide reads, in one-letter code: Allene oxide synthase 2, chloroplastic (510 aa).

Residues 1–31 constitute a chloroplast transit peptide; the sequence is MALTLSFSLPLPSLHQKIPSKYSTFRPIIVS. The heme b site is built by lysine 127, histidine 158, and lysine 162. Residues asparagine 315 and lysine 321 each contribute to the (13S)-hydroperoxy-(9Z,11E)-octadecadienoate site. Asparagine 315 contributes to the (13S)-hydroperoxy-(9Z,11E,15Z)-octadecatrienoate binding site. Lysine 463 and cysteine 465 together coordinate heme b.

The protein belongs to the cytochrome P450 family. Requires heme b as cofactor. As to expression, expressed in flower buds, leaves, roots, stems, petioles and cotyledons. Not detected in ripe fruits. Expressed in sieve elements.

Its subcellular location is the plastid. It is found in the chloroplast inner membrane. The catalysed reaction is (13S)-hydroperoxy-(9Z,11E,15Z)-octadecatrienoate = (9Z,13S,15Z)-12,13-epoxyoctadeca-9,11,15-trienoate + H2O. The enzyme catalyses (13S)-hydroperoxy-(9Z,11E)-octadecadienoate = (9Z,13S)-12,13-epoxyoctadeca-9,11-dienoate + H2O. Cytochrome P450 of the CYP74A subfamily involved in the biosynthesis of jasmonic acid from lipoxygenase-derived hydroperoxides of free fatty acids. Catalyzes the synthesis of unstable allene oxide, which is further converted spontaneously by hydrolysis or cyclization. Metabolizes 13- but not 9-hydroperoxides of linoleic and linolenic acids. Can use 15S-hydroperoxy-11(Z),13(E),17(Z)-eicosatrienoic acid (15-HPET) and 13S-hydroperoxy-9(Z),11(E),15(Z)-octadecatrienoic acid (13-HPOT) as substrates, but only 50% activity with 13S-hydroperoxy-9(Z),11(E)-octadecadienoic acid (13-HPOD). The protein is Allene oxide synthase 2, chloroplastic of Solanum lycopersicum (Tomato).